The chain runs to 42 residues: MQKLPLKEKCLTATANYHPGIRYIMTGYSAKYIYSSTYARFR.

In Escherichia coli (strain K12), this protein is Protein YmiD.